The primary structure comprises 632 residues: Chaperone protein HtpG (632 aa).

The a; substrate-binding stretch occupies residues 1-339; that stretch reads MTQQTMSFQA…SSDLPLNVSR (339 aa). Positions 340 to 559 are b; the sequence is EILQESRDVK…DNDMSGYLQR (220 aa). Residues 560–632 are c; sequence MLKAAGQSAP…TNALLLSRAA (73 aa).

This sequence belongs to the heat shock protein 90 family. In terms of assembly, homodimer.

It is found in the cytoplasm. Molecular chaperone. Has ATPase activity. The protein is Chaperone protein HtpG of Burkholderia pseudomallei (strain 1106a).